The chain runs to 449 residues: Plasmepsin IV (449 aa).

Residues 1-37 (MALTVKEEEFSNTLIKNASAFDRLKLGNLKNLKIQKK) are Cytoplasmic-facing. A propeptide spanning residues 1–121 (MALTVKEEEF…SGYAQKGYLG (121 aa)) is cleaved from the precursor. Residues 38 to 58 (LQFLYLILFVLITGVFFFFLI) traverse the membrane as a helical; Signal-anchor for type II membrane protein segment. The Lumenal portion of the chain corresponds to 59-449 (GNFYSHRKLY…SVGFAVAKNL (391 aa)). Residues 137–444 (FYGEGQIGTN…DYEKESVGFA (308 aa)) enclose the Peptidase A1 domain. Residue aspartate 155 is part of the active site. An intrachain disulfide couples cysteine 168 to cysteine 173. Residue aspartate 335 is part of the active site. A disulfide bridge links cysteine 370 with cysteine 406.

Belongs to the peptidase A1 family. In terms of assembly, component of the hemozoin formation complex (HFC) composed of falcipains FP2A and/or FP2B, plasmepsins PMII, PMIII/HAP and PMIV, heme detoxifying protein HDP and falcilysin FLN. The HFC complex is involved in hemoglobin degradation and detoxification of heme in the food vacuole during the asexual blood stage. In terms of processing, proteolytically cleaved into the soluble active mature form by cysteine proteases in the digestive vacuole of trophozoites. Proteolysis requires an acidic environment. Autoprocessing or transprocessing by other plasmepsins such as PMII may serve as an alternate activation system.

Its subcellular location is the membrane. It is found in the vacuole lumen. It catalyses the reaction Hydrolysis of the bonds linking certain hydrophobic residues in hemoglobin or globin. Also cleaves small molecules substrates such as Ala-Leu-Glu-Arg-Thr-Phe-|-Phe(NO2)-Ser-Phe-Pro-Thr.. Its activity is regulated as follows. Inhibited by pepstatin A. Functionally, during the asexual blood stage, catalyzes the cleavage of denatured host hemoglobin (Hb) or globins. Digestion of host Hb is an essential step which provides the parasite with amino acids for protein synthesis, and regulates osmolarity. This chain is Plasmepsin IV, found in Plasmodium falciparum (isolate HB3).